A 365-amino-acid polypeptide reads, in one-letter code: Isopentenyl-diphosphate delta-isomerase (365 aa).

Position 4–5 (4–5 (RK)) interacts with substrate. Residues 62–64 (GMT), S92, and N121 contribute to the FMN site. Residue 92 to 94 (SQR) coordinates substrate. Q155 contributes to the substrate binding site. E156 is a Mg(2+) binding site. FMN is bound by residues K187, T216, 267–269 (GVR), and 288–289 (AL).

This sequence belongs to the IPP isomerase type 2 family. In terms of assembly, homooctamer. Dimer of tetramers. The cofactor is FMN. NADPH is required as a cofactor. Mg(2+) serves as cofactor.

The protein resides in the cytoplasm. It catalyses the reaction isopentenyl diphosphate = dimethylallyl diphosphate. Its function is as follows. Involved in the biosynthesis of isoprenoids. Catalyzes the 1,3-allylic rearrangement of the homoallylic substrate isopentenyl (IPP) to its allylic isomer, dimethylallyl diphosphate (DMAPP). The chain is Isopentenyl-diphosphate delta-isomerase from Methanopyrus kandleri (strain AV19 / DSM 6324 / JCM 9639 / NBRC 100938).